A 631-amino-acid polypeptide reads, in one-letter code: MTDESSSSISYPPIKKYKKSLKLNNNTNNNNKNNNNHNNRDIVMQPNSTDEESSDNEKIGFSDPENEKINKHKASFKDSNDENNNNSTYYEDTDDDDYEDEDEDENHKIKDESDNSEDFNNHTKNTTDLDEGFKSTVNGSESEEEEEEEEYEEEEEEDEEGKFNLDQYDEFYEDDDDGDDDDDDDENAQDKVEILQIEHQNLDNDNDNDNDYANDNIYTKAKEALHLSAVPDKLPGREKEKATIASFIRAKLKANESGGCLYIAGMPGTGKTATVKEIIKELQAKKKQQGGGGGLNFQFIEINGMQLSDPHQLYHILYNKMQKTRKSLEPKKISSQDALRLIQRNFELKNKKKQFRVILVDEFDSLITKKQTVIYNLFEWPNKPNSKLIIIAIANTMNLPDTLLPRVKSRMGLQKVPFTPYNIEQLETIIKYRLQDLDAFDEESIQICSKRVAAVCGDARRALEICRKAATIANQEYQKKLLIFNNSNNNKSLSGSQKLPIPGPITADHIEEVFEQFSSPLLKKLNQLSFYEKLFLLCICRENQFSNVPEVKYGTISTRMRIITKKINVSCPNPTQLFQLAGNLLGCKFIIIQDDKPINWDHQIKLNLPLEDLSFGLEQDPDLKNLEISNN.

Low complexity-rich tracts occupy residues 1-14 and 22-37; these read MTDE…YPPI and KLNN…NNNH. The tract at residues 1–164 is disordered; sequence MTDESSSSIS…EEEDEEGKFN (164 aa). Residues 55–80 show a composition bias toward basic and acidic residues; sequence DNEKIGFSDPENEKINKHKASFKDSN. The span at 91–104 shows a compositional bias: acidic residues; that stretch reads EDTDDDDYEDEDED. Residues 105-133 show a composition bias toward basic and acidic residues; it reads ENHKIKDESDNSEDFNNHTKNTTDLDEGF. Residues 141 to 160 show a composition bias toward acidic residues; that stretch reads ESEEEEEEEEYEEEEEEDEE. ATP is bound by residues V230 and 265 to 273; that span reads GMPGTGKTA. Mg(2+) is bound by residues D361 and E362. ATP-binding residues include E362, N395, and R460.

This sequence belongs to the ORC1 family. As to quaternary structure, ORC is composed of six subunits.

The protein localises to the nucleus. Functionally, component of the origin recognition complex (ORC) that binds origins of replication. DNA-binding is ATP-dependent, however specific DNA sequences that define origins of replication have not been identified so far. ORC is required to assemble the pre-replication complex necessary to initiate DNA replication. The polypeptide is Origin recognition complex subunit 1 (orcA) (Dictyostelium discoideum (Social amoeba)).